The chain runs to 416 residues: Gamma-glutamyl phosphate reductase (416 aa).

Belongs to the gamma-glutamyl phosphate reductase family.

It localises to the cytoplasm. The enzyme catalyses L-glutamate 5-semialdehyde + phosphate + NADP(+) = L-glutamyl 5-phosphate + NADPH + H(+). It participates in amino-acid biosynthesis; L-proline biosynthesis; L-glutamate 5-semialdehyde from L-glutamate: step 2/2. Catalyzes the NADPH-dependent reduction of L-glutamate 5-phosphate into L-glutamate 5-semialdehyde and phosphate. The product spontaneously undergoes cyclization to form 1-pyrroline-5-carboxylate. This chain is Gamma-glutamyl phosphate reductase, found in Salmonella newport (strain SL254).